The chain runs to 245 residues: Probable phosphatase YcdX (245 aa).

Zn(2+)-binding residues include H7, H9, H15, H40, E73, H101, H131, D192, and H194.

It belongs to the PHP family. As to quaternary structure, homotrimer. Zn(2+) is required as a cofactor.

This chain is Probable phosphatase YcdX, found in Shigella dysenteriae serotype 1 (strain Sd197).